Consider the following 404-residue polypeptide: Glucose-1-phosphate adenylyltransferase (404 aa).

Alpha-D-glucose 1-phosphate-binding positions include tyrosine 99, glycine 164, 179–180 (EK), and serine 197.

Belongs to the bacterial/plant glucose-1-phosphate adenylyltransferase family.

The enzyme catalyses alpha-D-glucose 1-phosphate + ATP + H(+) = ADP-alpha-D-glucose + diphosphate. It participates in glycan biosynthesis; glycogen biosynthesis. Functionally, involved in the biosynthesis of ADP-glucose building block, required in the biosynthesis of maltose-1-phosphate (M1P) and in the elongation reactions to produce linear alpha-1,4-glucans. Catalyzes the reaction between ATP and alpha-D-glucose 1-phosphate (G1P) to produce pyrophosphate and ADP-Glc. This chain is Glucose-1-phosphate adenylyltransferase, found in Mycolicibacterium smegmatis (strain ATCC 700084 / mc(2)155) (Mycobacterium smegmatis).